A 223-amino-acid polypeptide reads, in one-letter code: Phosphoribosylformylglycinamidine synthase subunit PurQ (223 aa).

One can recognise a Glutamine amidotransferase type-1 domain in the interval 3–223; it reads FAVLVFPGSN…MVKSWREQHV (221 aa). The active-site Nucleophile is the Cys85. Residues His193 and Glu195 contribute to the active site.

Part of the FGAM synthase complex composed of 1 PurL, 1 PurQ and 2 PurS subunits.

It localises to the cytoplasm. It carries out the reaction N(2)-formyl-N(1)-(5-phospho-beta-D-ribosyl)glycinamide + L-glutamine + ATP + H2O = 2-formamido-N(1)-(5-O-phospho-beta-D-ribosyl)acetamidine + L-glutamate + ADP + phosphate + H(+). The enzyme catalyses L-glutamine + H2O = L-glutamate + NH4(+). It functions in the pathway purine metabolism; IMP biosynthesis via de novo pathway; 5-amino-1-(5-phospho-D-ribosyl)imidazole from N(2)-formyl-N(1)-(5-phospho-D-ribosyl)glycinamide: step 1/2. In terms of biological role, part of the phosphoribosylformylglycinamidine synthase complex involved in the purines biosynthetic pathway. Catalyzes the ATP-dependent conversion of formylglycinamide ribonucleotide (FGAR) and glutamine to yield formylglycinamidine ribonucleotide (FGAM) and glutamate. The FGAM synthase complex is composed of three subunits. PurQ produces an ammonia molecule by converting glutamine to glutamate. PurL transfers the ammonia molecule to FGAR to form FGAM in an ATP-dependent manner. PurS interacts with PurQ and PurL and is thought to assist in the transfer of the ammonia molecule from PurQ to PurL. The chain is Phosphoribosylformylglycinamidine synthase subunit PurQ from Staphylococcus aureus (strain Mu50 / ATCC 700699).